The following is a 138-amino-acid chain: Thyrotropin subunit beta (138 aa).

An N-terminal signal peptide occupies residues 1 to 20 (MTALFLMSMLFGLTCGQAMS). Disulfide bonds link Cys-22–Cys-72, Cys-36–Cys-87, Cys-39–Cys-125, Cys-47–Cys-103, Cys-51–Cys-105, and Cys-108–Cys-115. N-linked (GlcNAc...) asparagine glycosylation occurs at Asn-43. Residues 133-138 (LVGFSV) constitute a propeptide that is removed on maturation.

This sequence belongs to the glycoprotein hormones subunit beta family. Heterodimer of a common alpha chain and a unique beta chain which confers biological specificity to thyrotropin, lutropin, follitropin and gonadotropin.

The protein localises to the secreted. Its function is as follows. Indispensable for the control of thyroid structure and metabolism. This Homo sapiens (Human) protein is Thyrotropin subunit beta (TSHB).